A 121-amino-acid chain; its full sequence is Small ribosomal subunit protein uS13 (121 aa).

The disordered stretch occupies residues 91–121; it reads HRRGLPVRGQKTKNNARTRKGPVKTVANKKK.

It belongs to the universal ribosomal protein uS13 family. As to quaternary structure, part of the 30S ribosomal subunit. Forms a loose heterodimer with protein S19. Forms two bridges to the 50S subunit in the 70S ribosome.

In terms of biological role, located at the top of the head of the 30S subunit, it contacts several helices of the 16S rRNA. In the 70S ribosome it contacts the 23S rRNA (bridge B1a) and protein L5 of the 50S subunit (bridge B1b), connecting the 2 subunits; these bridges are implicated in subunit movement. Contacts the tRNAs in the A and P-sites. In Staphylococcus aureus (strain Mu3 / ATCC 700698), this protein is Small ribosomal subunit protein uS13.